A 245-amino-acid polypeptide reads, in one-letter code: MKIDLNADLGEGCGDDAALLGLVSSANIACGWHAGDADTMRRTVLLALEKGVAIGAHPGFPDRENFGRSEMRLPMEAARAGLLYQLGALDAIVRAEGGALRHVKPHGALYNQAAREPELAAVLARAIRDFNPALRAVGLAGGCFIDACRAEGLEVWQEGFADRGYRADGSLVPRGLPGALLQDDSAMLAQAEDMALRQTVAAVNGLRIPARVDTLCLHGDGEHALRFARLLRERLEALGVEICAD.

Belongs to the LamB/PxpA family. Forms a complex composed of PxpA, PxpB and PxpC.

The catalysed reaction is 5-oxo-L-proline + ATP + 2 H2O = L-glutamate + ADP + phosphate + H(+). Catalyzes the cleavage of 5-oxoproline to form L-glutamate coupled to the hydrolysis of ATP to ADP and inorganic phosphate. This is 5-oxoprolinase subunit A from Chromobacterium violaceum (strain ATCC 12472 / DSM 30191 / JCM 1249 / CCUG 213 / NBRC 12614 / NCIMB 9131 / NCTC 9757 / MK).